A 716-amino-acid polypeptide reads, in one-letter code: RNA-directed RNA polymerase catalytic subunit (716 aa).

The RdRp catalytic domain maps to serine 286 to isoleucine 465.

Belongs to the influenza viruses polymerase PB1 family. As to quaternary structure, RNA polymerase is composed of three subunits: PA, PB1 and PB2.

It catalyses the reaction RNA(n) + a ribonucleoside 5'-triphosphate = RNA(n+1) + diphosphate. This is RNA-directed RNA polymerase catalytic subunit (P2) from Dhori virus (strain Indian/1313/61) (Dho).